Here is a 258-residue protein sequence, read N- to C-terminus: Transmembrane O-methyltransferase homolog (258 aa).

Residues E104, 106–107 (GT), S112, E130, and S160 contribute to the S-adenosyl-L-methionine site.

This sequence belongs to the class I-like SAM-binding methyltransferase superfamily. Cation-dependent O-methyltransferase family. In terms of assembly, interacts with LHFPL5, PCDH15, TMC1, TMC2 and TMIE. Interacts directly with TMC1. The interaction of TOMT with TMC1 and TMC2 is required for the transportation of TMC1/2 into the stereocilia of hair cells.

The protein resides in the cytoplasm. The protein localises to the endoplasmic reticulum. The enzyme catalyses a catechol + S-adenosyl-L-methionine = a guaiacol + S-adenosyl-L-homocysteine + H(+). Catalyzes the O-methylation, and thereby the inactivation, of catecholamine neurotransmitters and catechol hormones. Required for auditory function. Component of the cochlear hair cell's mechanotransduction (MET) machinery. Involved in the assembly of the asymmetric tip-link MET complex. Required for transportation of TMC1 and TMC2 proteins into the mechanically sensitive stereocilia of the hair cells. The function in MET is independent of the enzymatic activity. The sequence is that of Transmembrane O-methyltransferase homolog from Rattus norvegicus (Rat).